The following is a 203-amino-acid chain: DNA-binding transcriptional repressor ScoC (203 aa).

The region spanning 13 to 157 is the HTH marR-type domain; the sequence is ALVFTQKMAQ…MMCMIRHIYG (145 aa). The segment at residues 63 to 86 is a DNA-binding region (H-T-H motif); it reads ISEIAKFGVMHVSTAFNFSKKLEE. Positions 183–203 are disordered; it reads KKKAKDSAADEPAEELEPVNS. Residues 191 to 203 are compositionally biased toward acidic residues; that stretch reads ADEPAEELEPVNS.

Homodimer. Interacts with SinR.

In terms of biological role, negative regulator of protease production and sporulation. Acts by binding directly to the promoter of protease genes (aprE and nprE), and by repressing oligopeptide permease operons (appABCDF and oppABCDF), thereby preventing uptake of oligopeptides required for initiation of sporulation. Acts with SinR as a corepressor of epr expression. Binds to non-m6A-5-methylated 5'-GACGAG-3' sites, tested with scpA; when the target is methylated by DnmA, this repressor no longer binds and transcription is up-regulated. This Bacillus subtilis (strain 168) protein is DNA-binding transcriptional repressor ScoC.